The chain runs to 367 residues: Biotin synthase (367 aa).

The Radical SAM core domain maps to 73-308 (CCGNTVDLCS…EQIIRYAGGR (236 aa)). Residues Cys91, Cys95, and Cys98 each coordinate [4Fe-4S] cluster. Residues Cys136, Cys173, Cys233, and Arg303 each contribute to the [2Fe-2S] cluster site.

The protein belongs to the radical SAM superfamily. Biotin synthase family. In terms of assembly, homodimer. [4Fe-4S] cluster serves as cofactor. The cofactor is [2Fe-2S] cluster.

It catalyses the reaction (4R,5S)-dethiobiotin + (sulfur carrier)-SH + 2 reduced [2Fe-2S]-[ferredoxin] + 2 S-adenosyl-L-methionine = (sulfur carrier)-H + biotin + 2 5'-deoxyadenosine + 2 L-methionine + 2 oxidized [2Fe-2S]-[ferredoxin]. It participates in cofactor biosynthesis; biotin biosynthesis; biotin from 7,8-diaminononanoate: step 2/2. In terms of biological role, catalyzes the conversion of dethiobiotin (DTB) to biotin by the insertion of a sulfur atom into dethiobiotin via a radical-based mechanism. This Picosynechococcus sp. (strain ATCC 27264 / PCC 7002 / PR-6) (Agmenellum quadruplicatum) protein is Biotin synthase.